The sequence spans 396 residues: Putative F-box protein At4g22660 (396 aa).

The F-box domain maps to 7–58; sequence PNTWSDLPLDLLNLVFKRLSFANFRQAKSVCSSWYSASKQSVPKNQIPWLML.

This chain is Putative F-box protein At4g22660, found in Arabidopsis thaliana (Mouse-ear cress).